A 526-amino-acid chain; its full sequence is Putative UDP-glucuronosyltransferase ugt-48 (526 aa).

The signal sequence occupies residues 1–17 (MLLRILTFLAVCQVTTS). 2 N-linked (GlcNAc...) asparagine glycosylation sites follow: Asn58 and Asn305. Residues 489-509 (FYNLDIIITAASIPVLIFIVL) form a helical membrane-spanning segment. A glycan (N-linked (GlcNAc...) asparagine) is linked at Asn513.

It belongs to the UDP-glycosyltransferase family. As to quaternary structure, interacts with cmd-1 in the presence of Ca(2+).

It is found in the membrane. The enzyme catalyses glucuronate acceptor + UDP-alpha-D-glucuronate = acceptor beta-D-glucuronoside + UDP + H(+). The chain is Putative UDP-glucuronosyltransferase ugt-48 (ugt-48) from Caenorhabditis elegans.